We begin with the raw amino-acid sequence, 470 residues long: AAA-ATPase At5g40000 (470 aa).

The signal sequence occupies residues 1-30; the sequence is MMMMGDSFGSIGSSMASLFFLWATIQQIFP. 248–255 lines the ATP pocket; the sequence is GPPGTGKS.

It belongs to the AAA ATPase family. BCS1 subfamily. Mg(2+) serves as cofactor.

It carries out the reaction ATP + H2O = ADP + phosphate + H(+). The polypeptide is AAA-ATPase At5g40000 (Arabidopsis thaliana (Mouse-ear cress)).